A 554-amino-acid chain; its full sequence is Gamma-aminobutyric acid receptor subunit alpha-4 (554 aa).

The signal sequence occupies residues 1–35 (MVSAKKVPAIALSAGVSFALLRFLCLAVCLNESPG). The Extracellular portion of the chain corresponds to 36 to 259 (QNQKEEKLCT…FHLRRKMGYF (224 aa)). N47 carries N-linked (GlcNAc...) asparagine glycosylation. 4-aminobutanoate is bound at residue R100. N-linked (GlcNAc...) asparagine glycans are attached at residues N144 and N157. T163 is a 4-aminobutanoate binding site. An intrachain disulfide couples C172 to C186. The chain crosses the membrane as a helical span at residues 260–280 (MIQTYIPCIMTVILSQVSFWI). Residues 281 to 284 (NKES) lie on the Cytoplasmic side of the membrane. Residues 285–305 (VPARTVFGITTVLTMTTLSIS) form a helical membrane-spanning segment. At 306–318 (ARHSLPKVSYATA) the chain is on the extracellular side. A helical membrane pass occupies residues 319 to 341 (MDWFIAVCFAFVFSALIEFAAVN). Topologically, residues 342 to 517 (YFTNIQMEKA…PPPSGSGTSK (176 aa)) are cytoplasmic. Disordered stretches follow at residues 350–381 (KAKR…QNTN), 397–435 (ESDV…SPNP), 452–471 (PSAS…ASVG), and 495–515 (ATGK…GSGT). The segment covering 410 to 422 (SSKSSTVVQESSK) has biased composition (low complexity). The span at 502 to 511 (TPPPSAPPPS) shows a compositional bias: pro residues. A helical membrane pass occupies residues 518–540 (IDKYARILFPVTFGAFNMVYWVV). Over 541 to 554 (YLSKDTMEKSESLM) the chain is Extracellular.

This sequence belongs to the ligand-gated ion channel (TC 1.A.9) family. Gamma-aminobutyric acid receptor (TC 1.A.9.5) subfamily. GABRA4 sub-subfamily. In terms of assembly, heteropentamer, formed by a combination of alpha (GABRA1-6), beta (GABRB1-3), gamma (GABRG1-3), delta (GABRD), epsilon (GABRE), rho (GABRR1-3), pi (GABRP) and theta (GABRQ) chains, each subunit exhibiting distinct physiological and pharmacological properties. As to expression, expressed in the brain.

Its subcellular location is the cell membrane. The protein resides in the postsynaptic cell membrane. The enzyme catalyses chloride(in) = chloride(out). With respect to regulation, potentiated by histamine. Functionally, alpha subunit of the heteropentameric ligand-gated chloride channel gated by gamma-aminobutyric acid (GABA), a major inhibitory neurotransmitter in the brain. GABA-gated chloride channels, also named GABA(A) receptors (GABAAR), consist of five subunits arranged around a central pore and contain GABA active binding site(s) located at the alpha and beta subunit interface(s). When activated by GABA, GABAARs selectively allow the flow of chloride anions across the cell membrane down their electrochemical gradient. GABAARs containing alpha-4 are predominantly extrasynaptic, contributing to tonic inhibition in dentate granule cells and thalamic relay neurons. Extrasynaptic alpha-4-containing GABAARs control levels of excitability and network activity. GABAAR containing alpha-4-beta-3-delta subunits can simultaneously bind GABA and histamine where histamine binds at the interface of two neighboring beta subunits, which may be involved in the regulation of sleep and wakefulness. The sequence is that of Gamma-aminobutyric acid receptor subunit alpha-4 from Homo sapiens (Human).